The following is a 379-amino-acid chain: Chorismate synthase (379 aa).

R48 and R54 together coordinate NADP(+). Residues 125-127 (RSS), 241-242 (NA), G286, 301-305 (KPTSS), and R327 contribute to the FMN site.

It belongs to the chorismate synthase family. As to quaternary structure, homotetramer. The cofactor is FMNH2.

The enzyme catalyses 5-O-(1-carboxyvinyl)-3-phosphoshikimate = chorismate + phosphate. It participates in metabolic intermediate biosynthesis; chorismate biosynthesis; chorismate from D-erythrose 4-phosphate and phosphoenolpyruvate: step 7/7. Its function is as follows. Catalyzes the anti-1,4-elimination of the C-3 phosphate and the C-6 proR hydrogen from 5-enolpyruvylshikimate-3-phosphate (EPSP) to yield chorismate, which is the branch point compound that serves as the starting substrate for the three terminal pathways of aromatic amino acid biosynthesis. This reaction introduces a second double bond into the aromatic ring system. This is Chorismate synthase from Rhodospirillum centenum (strain ATCC 51521 / SW).